A 224-amino-acid chain; its full sequence is Holliday junction branch migration complex subunit RuvA (224 aa).

The interval 1-67 (MISWLKGEKV…EDGTSLYGFI (67 aa)) is domain I. The domain II stretch occupies residues 68–146 (EVNQRDLFRE…RFTDNDKTIH (79 aa)). The interval 147 to 157 (ENKNDIEANQF) is flexible linker. Positions 157–224 (FSKYIDEIYL…ILMKLSEKST (68 aa)) are domain III.

Belongs to the RuvA family. As to quaternary structure, homotetramer. Forms an RuvA(8)-RuvB(12)-Holliday junction (HJ) complex. HJ DNA is sandwiched between 2 RuvA tetramers; dsDNA enters through RuvA and exits via RuvB. An RuvB hexamer assembles on each DNA strand where it exits the tetramer. Each RuvB hexamer is contacted by two RuvA subunits (via domain III) on 2 adjacent RuvB subunits; this complex drives branch migration. In the full resolvosome a probable DNA-RuvA(4)-RuvB(12)-RuvC(2) complex forms which resolves the HJ.

Its subcellular location is the cytoplasm. In terms of biological role, the RuvA-RuvB-RuvC complex processes Holliday junction (HJ) DNA during genetic recombination and DNA repair, while the RuvA-RuvB complex plays an important role in the rescue of blocked DNA replication forks via replication fork reversal (RFR). RuvA specifically binds to HJ cruciform DNA, conferring on it an open structure. The RuvB hexamer acts as an ATP-dependent pump, pulling dsDNA into and through the RuvAB complex. HJ branch migration allows RuvC to scan DNA until it finds its consensus sequence, where it cleaves and resolves the cruciform DNA. The protein is Holliday junction branch migration complex subunit RuvA of Prochlorococcus marinus (strain NATL2A).